The primary structure comprises 343 residues: Heat-inducible transcription repressor HrcA (343 aa).

The protein belongs to the HrcA family.

Negative regulator of class I heat shock genes (grpE-dnaK-dnaJ and groELS operons). Prevents heat-shock induction of these operons. This chain is Heat-inducible transcription repressor HrcA, found in Thermoanaerobacter sp. (strain X514).